We begin with the raw amino-acid sequence, 317 residues long: MPKRGKKAAADDGEEPKSEPETKKSKGAAKKTEKEAAGEGPVLYEDPPDQKTSPSGKSATLKICSWNVDGLRAWIKKKGLDWVKEEAPDILCLQETKCSENKLPAELQELPGLTHQYWSAPSDKEGYSGVGLLSRQCPLKVSYGIGEEEHDQEGRVIVAEFESFVLVTAYVPNAGRGLVRLEYRQRWDEAFRKFLKDLASRKPLVLCGDLNVAHEEIDLRNPKGNKKNAGFTPQERQGFGELLQAVPLADSFRHLYPNTAYAYTFWTYMMNARSKNVGWRLDYFLLSHSLLPALCDSKIRSKALGSDHCPITLYLAL.

The interval 1–58 is disordered; that stretch reads MPKRGKKAAADDGEEPKSEPETKKSKGAAKKTEKEAAGEGPVLYEDPPDQKTSPSGKS. Positions 2–32 are necessary for interaction with YBX1, binding to RNA, association together with NPM1 to rRNA, endoribonuclease activity on abasic RNA and localization in the nucleoli; that stretch reads PKRGKKAAADDGEEPKSEPETKKSKGAAKKT. 2 positions are modified to N6-acetyllysine; by EP300: Lys-6 and Lys-7. The Nuclear localization signal (NLS) signature appears at 8–12; that stretch reads AAADD. The segment covering 15–37 has biased composition (basic and acidic residues); that stretch reads EPKSEPETKKSKGAAKKTEKEAA. Ser-18 bears the Phosphoserine mark. The necessary for interaction with NPM1 and for efficient rRNA binding stretch occupies residues 22–32; the sequence is TKKSKGAAKKT. N6-acetyllysine occurs at positions 26, 30, 31, and 34. Position 53 is a phosphoserine (Ser-53). A Nuclear export signal (NES) motif is present at residues 63-79; it reads ICSWNVDGLRAWIKKKG. Cys-64 is modified (S-nitrosocysteine; alternate). Cys-64 and Cys-92 are oxidised to a cystine. Asp-69 contacts Mg(2+). An S-nitrosocysteine; alternate modification is found at Cys-92. Residue Glu-95 coordinates Mg(2+). The active site involves Tyr-170. N6-acetyllysine is present on Lys-196. The Mg(2+) site is built by Asp-209 and Asn-211. Asp-209 (proton donor/acceptor) is an active-site residue. Thr-232 is subject to Phosphothreonine; by CDK5. The tract at residues 288–317 is mitochondrial targeting sequence (MTS); the sequence is HSLLPALCDSKIRSKALGSDHCPITLYLAL. Position 307 (Asp-307) interacts with Mg(2+). Cys-309 bears the S-nitrosocysteine mark.

It belongs to the DNA repair enzymes AP/ExoA family. As to quaternary structure, monomer. Homodimer; disulfide-linked. Component of the SET complex, composed of at least APEX1, SET, ANP32A, HMGB2, NME1 and TREX1. Associates with the dimer XRCC5/XRCC6 in a DNA-dependent manner. Interacts with SIRT1; the interaction is increased in the context of genotoxic stress. Interacts with HDAC1, HDAC2 and HDAC3; the interactions are not dependent on the APEX1 acetylation status. Interacts with XRCC1; the interaction is induced by SIRT1 and increased with the APEX1 acetylated form. Interacts with NPM1 (via N-terminal domain); the interaction is RNA-dependent and decreases in hydrogen peroxide-damaged cells. Interacts (via N-terminus) with YBX1 (via C-terminus); the interaction is increased in presence of APEX1 acetylated at Lys-6 and Lys-7. Interacts with HNRNPL; the interaction is DNA-dependent. Interacts (via N-terminus) with KPNA1 and KPNA2. Interacts with TXN; the interaction stimulates the FOS/JUN AP-1 complex DNA-binding activity in a redox-dependent manner. Interacts with GZMA, KRT8, MDM2, POLB, PRDX6, PRPF19, RPLP0, TOMM20 and WDR77. Binds to CDK5. Requires Mg(2+) as cofactor. Mn(2+) serves as cofactor. In terms of processing, phosphorylated. Phosphorylation by kinase PKC or casein kinase CK2 results in enhanced redox activity that stimulates binding of the FOS/JUN AP-1 complex to its cognate binding site. AP-endodeoxyribonuclease activity is not affected by CK2-mediated phosphorylation. Phosphorylation of Thr-232 by CDK5 in response to MPP(+)/MPTP (1-methyl-4-phenylpyridinium) reduces AP-endodeoxyribonuclease activity resulting in accumulation of DNA damage and contributing to neuronal death. Post-translationally, acetylated on Lys-6 and Lys-7. Acetylation is increased by the transcriptional coactivator EP300 acetyltransferase, genotoxic agents like H(2)O(2) and methyl methanesulfonate (MMS). Acetylation increases its binding affinity to the negative calcium response element (nCaRE) DNA promoter. The acetylated form induces a stronger binding of YBX1 to the Y-box sequence in the MDR1 promoter than the unacetylated form. Deacetylated on lysines. Lys-6 and Lys-7 are deacetylated by SIRT1. Cleaved at Lys-30 by granzyme A to create the mitochondrial form; leading in reduction of binding to DNA, AP endodeoxyribonuclease activity, redox activation of transcription factors and to enhanced cell death. Cleaved by granzyme K; leading to intracellular ROS accumulation and enhanced cell death after oxidative stress. In terms of processing, cys-64 and Cys-92 are nitrosylated in response to nitric oxide (NO) and lead to the exposure of the nuclear export signal (NES). Post-translationally, ubiquitinated by MDM2; leading to translocation to the cytoplasm and proteasomal degradation. Expressed in both resting and stimulated B cells stimulated to switch (at protein level).

The protein resides in the nucleus. It localises to the nucleolus. Its subcellular location is the nucleus speckle. The protein localises to the endoplasmic reticulum. It is found in the cytoplasm. The protein resides in the mitochondrion. It carries out the reaction a deoxyribonucleotide-2'-deoxyribose-5'-monophosphate-DNA + H2O = a 5'-end 2'-deoxyribose-5'-monophosphate-DNA + a 3'-end 2'-deoxyribonucleotide-DNA + H(+). The enzyme catalyses Exonucleolytic cleavage in the 3'- to 5'-direction to yield nucleoside 5'-phosphates.. It catalyses the reaction a 3'-end 2'-deoxyribonucleotide-3'-phosphoglycolate-DNA + H2O = 2-phosphoglycolate + a 3'-end 2'-deoxyribonucleotide-DNA + H(+). The catalysed reaction is a 3'-end 2'-deoxyribonucleotide-8-oxoguanine-DNA + H2O = 8-oxo-dGMP + a 3'-end 2'-deoxyribonucleotide-DNA + H(+). Its activity is regulated as follows. NPM1 stimulates endodeoxyribonuclease activity on double-stranded DNA with AP sites, but inhibits endoribonuclease activity on single-stranded RNA containing AP sites. Multifunctional protein that plays a central role in the cellular response to oxidative stress. The two major activities of APEX1 are DNA repair and redox regulation of transcriptional factors. Functions as an apurinic/apyrimidinic (AP) endodeoxyribonuclease in the base excision repair (BER) pathway of DNA lesions induced by oxidative and alkylating agents. Initiates repair of AP sites in DNA by catalyzing hydrolytic incision of the phosphodiester backbone immediately adjacent to the damage, generating a single-strand break with 5'-deoxyribose phosphate and 3'-hydroxyl ends. Also incises at AP sites in the DNA strand of DNA/RNA hybrids, single-stranded DNA regions of R-loop structures, and single-stranded RNA molecules. Operates at switch sites of immunoglobulin (Ig) constant regions where it mediates Ig isotype class switch recombination. Processes AP sites induced by successive action of AICDA and UNG. Generates staggered nicks in opposite DNA strands resulting in the formation of double-strand DNA breaks that are finally resolved via non-homologous end joining repair pathway. Has 3'-5' exodeoxyribonuclease activity on mismatched deoxyribonucleotides at the 3' termini of nicked or gapped DNA molecules during short-patch BER. Possesses DNA 3' phosphodiesterase activity capable of removing lesions (such as phosphoglycolate and 8-oxoguanine) blocking the 3' side of DNA strand breaks. Also acts as an endoribonuclease involved in the control of single-stranded RNA metabolism. Plays a role in regulating MYC mRNA turnover by preferentially cleaving in between UA and CA dinucleotides of the MYC coding region determinant (CRD). In association with NMD1, plays a role in the rRNA quality control process during cell cycle progression. Acts as a loading factor for POLB onto non-incised AP sites in DNA and stimulates the 5'-terminal deoxyribose 5'-phosphate (dRp) excision activity of POLB. Exerts reversible nuclear redox activity to regulate DNA binding affinity and transcriptional activity of transcriptional factors by controlling the redox status of their DNA-binding domain, such as the FOS/JUN AP-1 complex after exposure to IR. Involved in calcium-dependent down-regulation of parathyroid hormone (PTH) expression by binding to negative calcium response elements (nCaREs). Together with HNRNPL or the dimer XRCC5/XRCC6, associates with nCaRE, acting as an activator of transcriptional repression. May also play a role in the epigenetic regulation of gene expression by participating in DNA demethylation. Stimulates the YBX1-mediated MDR1 promoter activity, when acetylated at Lys-6 and Lys-7, leading to drug resistance. Plays a role in protection from granzyme-mediated cellular repair leading to cell death. Binds DNA and RNA. Associates, together with YBX1, on the MDR1 promoter. Together with NPM1, associates with rRNA. This chain is DNA repair nuclease/redox regulator APEX1 (Apex1), found in Mus musculus (Mouse).